Consider the following 91-residue polypeptide: Probable Fe(2+)-trafficking protein (91 aa).

The protein belongs to the Fe(2+)-trafficking protein family.

In terms of biological role, could be a mediator in iron transactions between iron acquisition and iron-requiring processes, such as synthesis and/or repair of Fe-S clusters in biosynthetic enzymes. The polypeptide is Probable Fe(2+)-trafficking protein (Burkholderia multivorans (strain ATCC 17616 / 249)).